The primary structure comprises 47 residues: PhoP/PhoQ regulator MgrB (47 aa).

Residues 6–26 (WVLLIVIIAGCLLLWTQMLNV) traverse the membrane as a helical segment.

Belongs to the MgrB family. May form homooligomers. Probably interacts with the periplasmic domain of PhoQ.

Its subcellular location is the cell inner membrane. In terms of biological role, phoP-regulated transcription is redox-sensitive, being activated when the periplasm becomes more reducing. MgrB acts between DsbA/DsbB and PhoP/PhoQ in this pathway. Represses PhoP/PhoQ signaling, possibly by binding to the periplasmic domain of PhoQ, altering its activity and that of downstream effector PhoP. The polypeptide is PhoP/PhoQ regulator MgrB (Klebsiella pneumoniae (strain 342)).